A 254-amino-acid polypeptide reads, in one-letter code: Glc operon transcriptional activator (254 aa).

Positions 6-74 constitute an HTH gntR-type domain; that stretch reads RPICEVVAES…QGRDSRVARL (69 aa). A DNA-binding region (H-T-H motif) is located at residues 34 to 53; it reads ERRLCEKLGFSRSALREGLT.

Functionally, transcriptional activator of the glcDEFGB operon which is associated with glycolate utilization, and encodes malate synthase G and the genes needed for glycolate oxidase activity. Also negatively regulates the transcription of its own gene. Glycolate acts as an effector, but GlcC can also use acetate as an alternative effector. This Escherichia coli O6:H1 (strain CFT073 / ATCC 700928 / UPEC) protein is Glc operon transcriptional activator (glcC).